A 644-amino-acid chain; its full sequence is Exoribonuclease 2 (644 aa).

The 328-residue stretch at 189-516 folds into the RNB domain; the sequence is RQDLTALNFV…NHRLLKAVIK (328 aa). The region spanning 561–643 is the S1 motif domain; it reads NTRFAAEIID…ETRSIIARPA (83 aa).

Belongs to the RNR ribonuclease family. RNase II subfamily.

It localises to the cytoplasm. It carries out the reaction Exonucleolytic cleavage in the 3'- to 5'-direction to yield nucleoside 5'-phosphates.. Its function is as follows. Involved in mRNA degradation. Hydrolyzes single-stranded polyribonucleotides processively in the 3' to 5' direction. This chain is Exoribonuclease 2, found in Salmonella dublin (strain CT_02021853).